A 315-amino-acid polypeptide reads, in one-letter code: CID domain-containing protein 1 (315 aa).

In terms of domain architecture, CID spans 1–135 (MADFTEQTLR…RLHEVHQQVK (135 aa)). Positions 227–273 (MLEEYVKRLKNETNERETLESNLNMLIENVRMSIEHHEKLCREVKRR) form a coiled coil.

The protein is CID domain-containing protein 1 (cids-1) of Caenorhabditis elegans.